The sequence spans 48 residues: ATP synthase protein 8 (48 aa).

Residues 4-24 (LVPFFFVNQVVFAFIVLTVLI) traverse the membrane as a helical segment.

The protein belongs to the ATPase protein 8 family. In terms of assembly, F-type ATPases have 2 components, CF(1) - the catalytic core - and CF(0) - the membrane proton channel.

It localises to the mitochondrion membrane. Its function is as follows. Mitochondrial membrane ATP synthase (F(1)F(0) ATP synthase or Complex V) produces ATP from ADP in the presence of a proton gradient across the membrane which is generated by electron transport complexes of the respiratory chain. F-type ATPases consist of two structural domains, F(1) - containing the extramembraneous catalytic core and F(0) - containing the membrane proton channel, linked together by a central stalk and a peripheral stalk. During catalysis, ATP synthesis in the catalytic domain of F(1) is coupled via a rotary mechanism of the central stalk subunits to proton translocation. Part of the complex F(0) domain. Minor subunit located with subunit a in the membrane. The sequence is that of ATP synthase protein 8 (atp8) from Emericella nidulans (Aspergillus nidulans).